A 287-amino-acid polypeptide reads, in one-letter code: Large ribosomal subunit protein uL2 (287 aa).

Residues 221–287 (RGSVMNPCDH…SKRSRGGRDS (67 aa)) form a disordered region. Basic residues predominate over residues 258 to 287 (KTRKKNKPSNKLVVRRRRRISKRSRGGRDS).

This sequence belongs to the universal ribosomal protein uL2 family. In terms of assembly, part of the 50S ribosomal subunit. Forms a bridge to the 30S subunit in the 70S ribosome.

One of the primary rRNA binding proteins. Required for association of the 30S and 50S subunits to form the 70S ribosome, for tRNA binding and peptide bond formation. It has been suggested to have peptidyltransferase activity; this is somewhat controversial. Makes several contacts with the 16S rRNA in the 70S ribosome. The chain is Large ribosomal subunit protein uL2 from Prochlorococcus marinus (strain MIT 9301).